We begin with the raw amino-acid sequence, 331 residues long: Pectinesterase (331 aa).

A signal peptide spans 1 to 17 (MVKSVLASALFAVSALA). Position 139 (Q139) interacts with substrate. The active-site Proton donor is the D162. Catalysis depends on D183, which acts as the Nucleophile. 2 residues coordinate substrate: R248 and W250.

The protein belongs to the pectinesterase family.

It is found in the secreted. The catalysed reaction is [(1-&gt;4)-alpha-D-galacturonosyl methyl ester](n) + n H2O = [(1-&gt;4)-alpha-D-galacturonosyl](n) + n methanol + n H(+). Its pathway is glycan metabolism; pectin degradation; 2-dehydro-3-deoxy-D-gluconate from pectin: step 1/5. Involved in maceration and soft-rotting of plant tissue. The protein is Pectinesterase (pme1) of Aspergillus aculeatus.